The chain runs to 376 residues: Probable plastid-lipid-associated protein 3, chloroplastic (376 aa).

The transit peptide at 1–53 directs the protein to the chloroplast; sequence MATLFTVARPSSLLYVSSINPSKTFSPSISLKLNSLSFSFGYRPKPLRFSKIR. Residues 54 to 146 are disordered; sequence SSLPSESESE…EADAGNGSAV (93 aa). The span at 85-96 shows a compositional bias: polar residues; the sequence is PDSQPDNVTVNV. Residues 117–126 show a composition bias toward basic and acidic residues; sequence MESDPPRNED.

The protein belongs to the PAP/fibrillin family.

It localises to the plastid. The protein localises to the chloroplast. Its subcellular location is the plastoglobule. Functionally, probably involved in light/cold stress-related jasmonate (JA) biosynthesis. In Arabidopsis thaliana (Mouse-ear cress), this protein is Probable plastid-lipid-associated protein 3, chloroplastic (PAP3).